Here is a 122-residue protein sequence, read N- to C-terminus: MAAPVDLELKKAFTELQAKVIDTQQKVKLADIQIEQLNRTKKHAHLTDTEIMTLVDETNMYEGVGRMFILQSKEAIHNQLLEKQKIAEEKIKELEQKKSYLERSVKEAEDNIREMLMARRAQ.

Residue A2 is modified to N-acetylalanine.

The protein belongs to the prefoldin subunit beta family. In terms of assembly, heterohexamer of two PFD-alpha type and four PFD-beta type subunits.

Binds specifically to cytosolic chaperonin (c-CPN) and transfers target proteins to it. Binds to nascent polypeptide chain and promotes folding in an environment in which there are many competing pathways for nonnative proteins. The polypeptide is Prefoldin subunit 1 (PFDN1) (Pongo abelii (Sumatran orangutan)).